Consider the following 380-residue polypeptide: Cytochrome b (380 aa).

Helical transmembrane passes span 34 to 54, 78 to 99, 114 to 134, and 179 to 199; these read FGSL…LLAA, WLIR…YLHI, WNTG…GYVL, and FFAL…IHLT. Residues histidine 84 and histidine 98 each coordinate heme b. 2 residues coordinate heme b: histidine 183 and histidine 197. Position 202 (histidine 202) interacts with a ubiquinone. 4 consecutive transmembrane segments (helical) span residues 227–247, 289–309, 321–341, and 348–368; these read LKDI…ALFS, LGGV…PFLH, LSQL…WVGS, and FIII…VLFP.

This sequence belongs to the cytochrome b family. The cytochrome bc1 complex contains 11 subunits: 3 respiratory subunits (MT-CYB, CYC1 and UQCRFS1), 2 core proteins (UQCRC1 and UQCRC2) and 6 low-molecular weight proteins (UQCRH/QCR6, UQCRB/QCR7, UQCRQ/QCR8, UQCR10/QCR9, UQCR11/QCR10 and a cleavage product of UQCRFS1). This cytochrome bc1 complex then forms a dimer. Heme b serves as cofactor.

Its subcellular location is the mitochondrion inner membrane. Its function is as follows. Component of the ubiquinol-cytochrome c reductase complex (complex III or cytochrome b-c1 complex) that is part of the mitochondrial respiratory chain. The b-c1 complex mediates electron transfer from ubiquinol to cytochrome c. Contributes to the generation of a proton gradient across the mitochondrial membrane that is then used for ATP synthesis. This is Cytochrome b (MT-CYB) from Pharomachrus antisianus (Crested quetzal).